The chain runs to 130 residues: MSMMNRNIGFLSRTLKTSVPKRAGLLSFRAYSNEAKVNWLEEVQAEEEHAKRSSEFWKKVTYYIGGPALILASANAYYIYCKHQEHAKHVEDTDPGYSFENLRFKKYPWGDGSKTLFWNDKVNHLKKDDE.

Residues 1–31 constitute a mitochondrion transit peptide; it reads MSMMNRNIGFLSRTLKTSVPKRAGLLSFRAY. Over 32-61 the chain is Mitochondrial matrix; that stretch reads SNEAKVNWLEEVQAEEEHAKRSSEFWKKVT. The chain crosses the membrane as a helical span at residues 62-80; that stretch reads YYIGGPALILASANAYYIY. At 81 to 130 the chain is on the mitochondrial intermembrane side; the sequence is CKHQEHAKHVEDTDPGYSFENLRFKKYPWGDGSKTLFWNDKVNHLKKDDE.

It belongs to the cytochrome c oxidase subunit 6A family. Component of the cytochrome c oxidase (complex IV, CIV), a multisubunit enzyme composed of a catalytic core of 3 subunits and several supernumerary subunits. The complex exists as a monomer or a dimer and forms supercomplexes (SCs) in the inner mitochondrial membrane with ubiquinol-cytochrome c oxidoreductase (cytochrome b-c1 complex, complex III, CIII).

Its subcellular location is the mitochondrion inner membrane. The protein operates within energy metabolism; oxidative phosphorylation. In terms of biological role, component of the cytochrome c oxidase, the last enzyme in the mitochondrial electron transport chain which drives oxidative phosphorylation. The respiratory chain contains 3 multisubunit complexes succinate dehydrogenase (complex II, CII), ubiquinol-cytochrome c oxidoreductase (cytochrome b-c1 complex, complex III, CIII) and cytochrome c oxidase (complex IV, CIV), that cooperate to transfer electrons derived from NADH and succinate to molecular oxygen, creating an electrochemical gradient over the inner membrane that drives transmembrane transport and the ATP synthase. Cytochrome c oxidase is the component of the respiratory chain that catalyzes the reduction of oxygen to water. Electrons originating from reduced cytochrome c in the intermembrane space (IMS) are transferred via the dinuclear copper A center (CU(A)) of subunit 2 and heme A of subunit 1 to the active site in subunit 1, a binuclear center (BNC) formed by heme A3 and copper B (CU(B)). The BNC reduces molecular oxygen to 2 water molecules unsing 4 electrons from cytochrome c in the IMS and 4 protons from the mitochondrial matrix. The chain is Cytochrome c oxidase subunit 13, mitochondrial (cox13) from Schizosaccharomyces pombe (strain 972 / ATCC 24843) (Fission yeast).